The primary structure comprises 870 residues: Valine--tRNA ligase (870 aa).

The short motif at 42–52 (PNVTGVLHIGH) is the 'HIGH' region element. The short motif at 527–531 (KMSKS) is the 'KMSKS' region element. Lys-530 serves as a coordination point for ATP. The stretch at 800 to 870 (LENVDLSGIL…ISVELQNLRG (71 aa)) forms a coiled coil.

Belongs to the class-I aminoacyl-tRNA synthetase family. ValS type 1 subfamily. Monomer.

The protein localises to the cytoplasm. It carries out the reaction tRNA(Val) + L-valine + ATP = L-valyl-tRNA(Val) + AMP + diphosphate. Catalyzes the attachment of valine to tRNA(Val). As ValRS can inadvertently accommodate and process structurally similar amino acids such as threonine, to avoid such errors, it has a 'posttransfer' editing activity that hydrolyzes mischarged Thr-tRNA(Val) in a tRNA-dependent manner. In Campylobacter jejuni (strain RM1221), this protein is Valine--tRNA ligase.